We begin with the raw amino-acid sequence, 214 residues long: tRNA (guanine-N(7)-)-methyltransferase (214 aa).

The S-adenosyl-L-methionine site is built by Glu-43, Glu-68, Asp-95, and Asp-117. Residue Asp-117 is part of the active site. Substrate is bound by residues Lys-121, Asp-153, and 190-193 (TEYE).

The protein belongs to the class I-like SAM-binding methyltransferase superfamily. TrmB family.

It catalyses the reaction guanosine(46) in tRNA + S-adenosyl-L-methionine = N(7)-methylguanosine(46) in tRNA + S-adenosyl-L-homocysteine. Its pathway is tRNA modification; N(7)-methylguanine-tRNA biosynthesis. Functionally, catalyzes the formation of N(7)-methylguanine at position 46 (m7G46) in tRNA. In Staphylococcus aureus (strain USA300), this protein is tRNA (guanine-N(7)-)-methyltransferase.